Reading from the N-terminus, the 115-residue chain is Large ribosomal subunit protein uL22 (115 aa).

It belongs to the universal ribosomal protein uL22 family. As to quaternary structure, part of the 50S ribosomal subunit.

This protein binds specifically to 23S rRNA; its binding is stimulated by other ribosomal proteins, e.g. L4, L17, and L20. It is important during the early stages of 50S assembly. It makes multiple contacts with different domains of the 23S rRNA in the assembled 50S subunit and ribosome. Its function is as follows. The globular domain of the protein is located near the polypeptide exit tunnel on the outside of the subunit, while an extended beta-hairpin is found that lines the wall of the exit tunnel in the center of the 70S ribosome. The chain is Large ribosomal subunit protein uL22 from Coxiella burnetii (strain CbuK_Q154) (Coxiella burnetii (strain Q154)).